A 451-amino-acid polypeptide reads, in one-letter code: Tubulin alpha chain (451 aa).

A GTP-binding site is contributed by Gln-11. The residue at position 40 (Lys-40) is an N6-acetyllysine. 6 residues coordinate GTP: Glu-71, Gly-144, Thr-145, Thr-179, Asn-206, and Asn-228. Residue Glu-71 coordinates Mg(2+). Glu-254 is an active-site residue. Positions 432–451 (YEEVGAESAEGDDEDEGEDY) are disordered.

Belongs to the tubulin family. Dimer of alpha and beta chains. A typical microtubule is a hollow water-filled tube with an outer diameter of 25 nm and an inner diameter of 15 nM. Alpha-beta heterodimers associate head-to-tail to form protofilaments running lengthwise along the microtubule wall with the beta-tubulin subunit facing the microtubule plus end conferring a structural polarity. Microtubules usually have 13 protofilaments but different protofilament numbers can be found in some organisms and specialized cells. Requires Mg(2+) as cofactor. In terms of processing, undergoes a tyrosination/detyrosination cycle, the cyclic removal and re-addition of a C-terminal tyrosine residue by the enzymes tubulin tyrosine carboxypeptidase (TTCP) and tubulin tyrosine ligase (TTL), respectively. Acetylation of alpha chains at Lys-40 stabilizes microtubules and affects affinity and processivity of microtubule motors. This modification has a role in multiple cellular functions, ranging from cell motility, cell cycle progression or cell differentiation to intracellular trafficking and signaling.

It localises to the cytoplasm. The protein localises to the cytoskeleton. It carries out the reaction GTP + H2O = GDP + phosphate + H(+). Functionally, tubulin is the major constituent of microtubules, a cylinder consisting of laterally associated linear protofilaments composed of alpha- and beta-tubulin heterodimers. Microtubules grow by the addition of GTP-tubulin dimers to the microtubule end, where a stabilizing cap forms. Below the cap, tubulin dimers are in GDP-bound state, owing to GTPase activity of alpha-tubulin. This chain is Tubulin alpha chain (TBA), found in Daucus carota (Wild carrot).